A 189-amino-acid polypeptide reads, in one-letter code: ADP-ribosylation factor H (189 aa).

Residues 34–40 (DGAGKST), 75–79 (DVGGQ), and 134–137 (NKQD) each bind GTP.

The protein belongs to the small GTPase superfamily. Arf family.

It localises to the golgi apparatus. In terms of biological role, GTP-binding protein that may be involved in protein trafficking. May modulate vesicle budding and uncoating within the Golgi apparatus. This is ADP-ribosylation factor H (arrH) from Dictyostelium discoideum (Social amoeba).